The chain runs to 174 residues: NADH-quinone oxidoreductase subunit C (174 aa).

This sequence belongs to the complex I 30 kDa subunit family. NDH-1 is composed of 14 different subunits. Subunits NuoB, C, D, E, F, and G constitute the peripheral sector of the complex.

It is found in the cell membrane. The enzyme catalyses a quinone + NADH + 5 H(+)(in) = a quinol + NAD(+) + 4 H(+)(out). In terms of biological role, NDH-1 shuttles electrons from NADH, via FMN and iron-sulfur (Fe-S) centers, to quinones in the respiratory chain. The immediate electron acceptor for the enzyme in this species is believed to be ubiquinone. Couples the redox reaction to proton translocation (for every two electrons transferred, four hydrogen ions are translocated across the cytoplasmic membrane), and thus conserves the redox energy in a proton gradient. The chain is NADH-quinone oxidoreductase subunit C from Roseiflexus castenholzii (strain DSM 13941 / HLO8).